We begin with the raw amino-acid sequence, 211 residues long: RING finger protein narya (211 aa).

The RING-type zinc finger occupies 6–47; it reads CNKCFRHRKTDPAVPFHLTQCRHVICGPCLGQSSLEKNCPLC. Positions 149–211 are disordered; the sequence is RRRHSAGERF…FGSDTKGFRL (63 aa). Residues 153-165 show a composition bias toward basic and acidic residues; that stretch reads SAGERFHTPEFKE. Positions 172–184 are enriched in low complexity; it reads STSDKSPSDMPSD.

As to quaternary structure, may interact with itself, with nenya and vilya through its RING-type zinc finger. As to expression, expressed in nurse cell and pro-oocytes (at protein level).

It localises to the chromosome. Required for the formation of DNA double-strand breaks (DSBs) together with nenya and vilya during the meiotic recombination process. Plays a role in DSBs processing into crossovers. Plays a redundant role with nenya in chromosome segregation during female meiosis. The protein is RING finger protein narya of Drosophila melanogaster (Fruit fly).